The sequence spans 232 residues: Adenosylcobinamide-GDP ribazoletransferase (232 aa).

6 consecutive transmembrane segments (helical) span residues 31 to 51 (LPSFFPLVGYIVGSIYYLGAL), 59 to 79 (VFFLVLAFYFFDLFHFDGFLD), 102 to 122 (VGPFAVFFGTLFVVVFWNLYL), 126 to 146 (PFYFFISSTFGRYSMVLLMAF), 167 to 187 (LLISTIFTFFLIIFFKQYIIS), and 209 to 229 (VTGDVLGGTCLFVNGLILLIL).

It belongs to the CobS family. Requires Mg(2+) as cofactor.

It localises to the cell inner membrane. The enzyme catalyses alpha-ribazole + adenosylcob(III)inamide-GDP = adenosylcob(III)alamin + GMP + H(+). It carries out the reaction alpha-ribazole 5'-phosphate + adenosylcob(III)inamide-GDP = adenosylcob(III)alamin 5'-phosphate + GMP + H(+). It participates in cofactor biosynthesis; adenosylcobalamin biosynthesis; adenosylcobalamin from cob(II)yrinate a,c-diamide: step 7/7. Joins adenosylcobinamide-GDP and alpha-ribazole to generate adenosylcobalamin (Ado-cobalamin). Also synthesizes adenosylcobalamin 5'-phosphate from adenosylcobinamide-GDP and alpha-ribazole 5'-phosphate. The polypeptide is Adenosylcobinamide-GDP ribazoletransferase (Thermosipho africanus (strain TCF52B)).